The primary structure comprises 254 residues: MASSTISLQSISMTTLNNLSYSKQFHRSSLLGFSKSFQNFGISSNGPGSSSPTSFTPKKKLTPTRALSQNLGNTENPRPSKVQELSVYEINDLDRHSPKILKNAFSFRFGLGDLVPFTNKLYTGDLKKRVGITAGLCVVIEHVPEKNGDRFEATYSFYFGDYGHLSVQGPYLTYEDSFLAITGGAGIFEGAYGQVKLQQLVYPTKLFYTFYLKGLANDLPLELIGTPVPPSKDVEPAPEAKALKPSGVVSNFTN.

The N-terminal 78 residues, 1-78 (MASSTISLQS…QNLGNTENPR (78 aa)), are a transit peptide targeting the chloroplast. The segment covering 44–56 (SNGPGSSSPTSFT) has biased composition (low complexity). The disordered stretch occupies residues 44 to 79 (SNGPGSSSPTSFTPKKKLTPTRALSQNLGNTENPRP). Polar residues predominate over residues 65 to 77 (RALSQNLGNTENP).

It belongs to the allene oxide cyclase family. As to expression, highly expressed in fully developed leaves.

The protein localises to the plastid. Its subcellular location is the chloroplast. The catalysed reaction is (9Z,13S,15Z)-12,13-epoxyoctadeca-9,11,15-trienoate = (9S,13S,15Z)-12-oxophyto-10,15-dienoate. Functionally, involved in the production of 12-oxo-phytodienoic acid (OPDA), a precursor of jasmonic acid. The protein is Allene oxide cyclase 1, chloroplastic (AOC1) of Arabidopsis thaliana (Mouse-ear cress).